The chain runs to 49 residues: uncharacterized protein (49 aa).

A helical transmembrane segment spans residues 20-42; sequence LFLVGLTIGKMATSRILSFLGFI.

It is found in the membrane. This is an uncharacterized protein from Dictyostelium discoideum (Social amoeba).